The following is a 204-amino-acid chain: Protein GrpE (204 aa).

The segment at 1 to 52 (MSSKNNPESETKAKNKWEKVMEAEEEQEEGGGDGSQEMEPHREGLEFPSREK) is disordered. 2 stretches are compositionally biased toward basic and acidic residues: residues 7–22 (PESE…KVME) and 38–52 (MEPH…SREK).

Belongs to the GrpE family. As to quaternary structure, homodimer.

It is found in the cytoplasm. Functionally, participates actively in the response to hyperosmotic and heat shock by preventing the aggregation of stress-denatured proteins, in association with DnaK and GrpE. It is the nucleotide exchange factor for DnaK and may function as a thermosensor. Unfolded proteins bind initially to DnaJ; upon interaction with the DnaJ-bound protein, DnaK hydrolyzes its bound ATP, resulting in the formation of a stable complex. GrpE releases ADP from DnaK; ATP binding to DnaK triggers the release of the substrate protein, thus completing the reaction cycle. Several rounds of ATP-dependent interactions between DnaJ, DnaK and GrpE are required for fully efficient folding. In Coxiella burnetii (strain Dugway 5J108-111), this protein is Protein GrpE.